Consider the following 385-residue polypeptide: ATP phosphoribosyltransferase regulatory subunit (385 aa).

The protein belongs to the class-II aminoacyl-tRNA synthetase family. HisZ subfamily. As to quaternary structure, heteromultimer composed of HisG and HisZ subunits.

It localises to the cytoplasm. The protein operates within amino-acid biosynthesis; L-histidine biosynthesis; L-histidine from 5-phospho-alpha-D-ribose 1-diphosphate: step 1/9. In terms of biological role, required for the first step of histidine biosynthesis. May allow the feedback regulation of ATP phosphoribosyltransferase activity by histidine. This chain is ATP phosphoribosyltransferase regulatory subunit, found in Laribacter hongkongensis (strain HLHK9).